The chain runs to 162 residues: uncharacterized protein (162 aa).

The protein belongs to the M.jannaschii MJ0150/MJ0739/MJ0745/MJ1460/MJ1642 family.

This is an uncharacterized protein from Methanocaldococcus jannaschii (strain ATCC 43067 / DSM 2661 / JAL-1 / JCM 10045 / NBRC 100440) (Methanococcus jannaschii).